The primary structure comprises 492 residues: Catalase isozyme 1 (492 aa).

Active-site residues include H65 and N138. Y348 serves as a coordination point for heme.

It belongs to the catalase family. As to quaternary structure, homotetramer. It depends on heme as a cofactor.

The protein resides in the cytoplasm. It localises to the cytosol. It is found in the peroxisome matrix. The catalysed reaction is 2 H2O2 = O2 + 2 H2O. With respect to regulation, inhibited by salicylic acid. Catalyzes the degradation of hydrogen peroxide (H(2)O(2)) generated by peroxisomal oxidases to water and oxygen, thereby protecting cells from the toxic effects of hydrogen peroxide. The chain is Catalase isozyme 1 (CAT-1) from Nicotiana tabacum (Common tobacco).